A 430-amino-acid polypeptide reads, in one-letter code: 2-deoxy-scyllo-inosose synthase (430 aa).

Residues aspartate 42, 73 to 76 (EVHK), 105 to 109 (GVTGN), 129 to 130 (TT), 140 to 142 (SLK), and 151 to 152 (KN) each bind NAD(+). The active site involves lysine 142. Glutamate 184 lines the Co(2+) pocket. Glutamate 244 is an active-site residue. 2 residues coordinate Co(2+): histidine 247 and histidine 263. The interval 371-430 (RGGAGGGAAEPAAARTGPVPDGPEAAVPATPGPVPAGPAAAAPLPSGPAPTAPAAAGPVP) is disordered. The segment covering 379 to 399 (AEPAAARTGPVPDGPEAAVPA) has biased composition (low complexity).

This sequence belongs to the sugar phosphate cyclases superfamily. DOI synthase family. The cofactor is NAD(+). It depends on Co(2+) as a cofactor.

It carries out the reaction D-glucose 6-phosphate = 2-deoxy-L-scyllo-inosose + phosphate. It functions in the pathway metabolic intermediate biosynthesis; 2-deoxystreptamine biosynthesis; 2-deoxystreptamine from D-glucose 6-phosphate: step 1/4. Its pathway is antibiotic biosynthesis; neomycin biosynthesis. Its function is as follows. Catalyzes the intramolecular carbocycle formation from D-glucose-6-phosphate to 2-deoxy-scyllo-inosose (DOI). In Streptomyces fradiae (Streptomyces roseoflavus), this protein is 2-deoxy-scyllo-inosose synthase (neoC).